The primary structure comprises 128 residues: Large ribosomal subunit protein bL12 (128 aa).

The protein belongs to the bacterial ribosomal protein bL12 family. In terms of assembly, homodimer. Part of the ribosomal stalk of the 50S ribosomal subunit. Forms a multimeric L10(L12)X complex, where L10 forms an elongated spine to which 2 to 4 L12 dimers bind in a sequential fashion. Binds GTP-bound translation factors.

Forms part of the ribosomal stalk which helps the ribosome interact with GTP-bound translation factors. Is thus essential for accurate translation. The sequence is that of Large ribosomal subunit protein bL12 from Kosmotoga olearia (strain ATCC BAA-1733 / DSM 21960 / TBF 19.5.1).